Reading from the N-terminus, the 484-residue chain is Calcium uniporter protein, mitochondrial (484 aa).

The transit peptide at 1 to 33 (MGHVLGGTLLAANRLARPPAVVLGKPRVCCWRA) directs the protein to the mitochondrion. Over 34–304 (SPWPVIVSSA…CDLLAHKGAH (271 aa)) the chain is Mitochondrial matrix. 2 disordered regions span residues 59–104 (ARYE…KGRL) and 188–227 (YTGG…DTHW). The segment covering 61 to 82 (YEARGRSTTQRKVDDRPWHRES) has biased composition (basic and acidic residues). Residues 83 to 93 (SGSLPKSTSPD) show a composition bias toward polar residues. A helical membrane pass occupies residues 305 to 326 (ALAKGGFAALAAWWGIVYYVTF). Topologically, residues 327-334 (HTDMGWDL) are mitochondrial intermembrane. Positions 332–340 (WDLVEPITY) match the Selectivity filter motif. The helical transmembrane segment at 335-355 (VEPITYLAGLASIMGGYLWFL) threads the bilayer. E336 serves as a coordination point for Ca(2+). Topologically, residues 356 to 484 (FISRDLSYKA…NEAAANVPGD (129 aa)) are mitochondrial matrix. 2 stretches are compositionally biased toward basic and acidic residues: residues 426–435 (KEVLEEEKGG) and 452–462 (DHDHDHDHVSH). Residues 426–484 (KEVLEEEKGGKARKREQEDEDGDGDDDHDHDHDHVSHGAELQGQDILHANEAAANVPGD) are disordered.

It belongs to the MCU (TC 1.A.77) family. In terms of assembly, homotetramer, assembles in a dimer or dimers configuration with two interfaces.

It is found in the mitochondrion inner membrane. It catalyses the reaction Ca(2+)(in) = Ca(2+)(out). Inhibited by ruthenium red or its derivative Ru360. In terms of biological role, highly selective calcium channel localized to the inner mitochondrial membrane, which mediates calcium uptake into the mitochondrial matrix. Mitochondrial calcium homeostasis plays key roles in cellular physiology and regulates ATP production, cytoplasmic calcium signals and activation of cell death pathways. Sufficient to operate as a pore-forming channel without the need of calcium-sensor or auxiliary subunit. This Metarhizium acridum (strain CQMa 102) protein is Calcium uniporter protein, mitochondrial.